The primary structure comprises 92 residues: Long neurotoxin 2 (92 aa).

A signal peptide spans 1-21; sequence MKTLLLTLVVVTIVCLDLGYT. Intrachain disulfides connect cysteine 24-cysteine 42, cysteine 35-cysteine 63, cysteine 48-cysteine 52, cysteine 67-cysteine 79, and cysteine 80-cysteine 85.

This sequence belongs to the three-finger toxin family. Long-chain subfamily. Type II alpha-neurotoxin sub-subfamily. Expressed by the venom gland.

The protein localises to the secreted. Its function is as follows. Binds with high affinity to muscular (alpha-1/CHRNA1) and neuronal (alpha-7/CHRNA7) nicotinic acetylcholine receptor (nAChR) and inhibits acetylcholine from binding to the receptor, thereby impairing neuromuscular and neuronal transmission. This Oxyuranus microlepidotus (Inland taipan) protein is Long neurotoxin 2.